The chain runs to 147 residues: Myoglobin (147 aa).

A Globin domain is found at 2 to 141 (ADFDMVLKCW…IITDMEADYK (140 aa)). H60 is a binding site for nitrite. An O2-binding site is contributed by H60. H89 is a heme b binding site.

Belongs to the globin family. In terms of assembly, monomeric.

The protein localises to the cytoplasm. It is found in the sarcoplasm. The enzyme catalyses Fe(III)-heme b-[protein] + nitric oxide + H2O = Fe(II)-heme b-[protein] + nitrite + 2 H(+). It carries out the reaction H2O2 + AH2 = A + 2 H2O. In terms of biological role, monomeric heme protein which primary function is to store oxygen and facilitate its diffusion within muscle tissues. Reversibly binds oxygen through a pentacoordinated heme iron and enables its timely and efficient release as needed during periods of heightened demand. Depending on the oxidative conditions of tissues and cells, and in addition to its ability to bind oxygen, it also has a nitrite reductase activity whereby it regulates the production of bioactive nitric oxide. Under stress conditions, like hypoxia and anoxia, it also protects cells against reactive oxygen species thanks to its pseudoperoxidase activity. The polypeptide is Myoglobin (mb) (Channichthys rhinoceratus (Unicorn icefish)).